The sequence spans 398 residues: 1-deoxy-D-xylulose 5-phosphate reductoisomerase (398 aa).

The NADPH site is built by T10, G11, S12, I13, K37, N38, and N124. K125 serves as a coordination point for 1-deoxy-D-xylulose 5-phosphate. Position 126 (E126) interacts with NADPH. D150 lines the Mn(2+) pocket. Positions 151, 152, 186, and 209 each coordinate 1-deoxy-D-xylulose 5-phosphate. Mn(2+) is bound at residue E152. G215 provides a ligand contact to NADPH. Positions 222, 227, 228, and 231 each coordinate 1-deoxy-D-xylulose 5-phosphate. E231 provides a ligand contact to Mn(2+).

The protein belongs to the DXR family. Homodimer. Mg(2+) is required as a cofactor. The cofactor is Mn(2+).

The catalysed reaction is 2-C-methyl-D-erythritol 4-phosphate + NADP(+) = 1-deoxy-D-xylulose 5-phosphate + NADPH + H(+). The protein operates within isoprenoid biosynthesis; isopentenyl diphosphate biosynthesis via DXP pathway; isopentenyl diphosphate from 1-deoxy-D-xylulose 5-phosphate: step 1/6. Catalyzes the NADPH-dependent rearrangement and reduction of 1-deoxy-D-xylulose-5-phosphate (DXP) to 2-C-methyl-D-erythritol 4-phosphate (MEP). In Buchnera aphidicola subsp. Acyrthosiphon pisum (strain APS) (Acyrthosiphon pisum symbiotic bacterium), this protein is 1-deoxy-D-xylulose 5-phosphate reductoisomerase.